The primary structure comprises 95 residues: Aspartyl/glutamyl-tRNA(Asn/Gln) amidotransferase subunit C (95 aa).

The protein belongs to the GatC family. In terms of assembly, heterotrimer of A, B and C subunits.

It catalyses the reaction L-glutamyl-tRNA(Gln) + L-glutamine + ATP + H2O = L-glutaminyl-tRNA(Gln) + L-glutamate + ADP + phosphate + H(+). It carries out the reaction L-aspartyl-tRNA(Asn) + L-glutamine + ATP + H2O = L-asparaginyl-tRNA(Asn) + L-glutamate + ADP + phosphate + 2 H(+). Functionally, allows the formation of correctly charged Asn-tRNA(Asn) or Gln-tRNA(Gln) through the transamidation of misacylated Asp-tRNA(Asn) or Glu-tRNA(Gln) in organisms which lack either or both of asparaginyl-tRNA or glutaminyl-tRNA synthetases. The reaction takes place in the presence of glutamine and ATP through an activated phospho-Asp-tRNA(Asn) or phospho-Glu-tRNA(Gln). In Campylobacter curvus (strain 525.92), this protein is Aspartyl/glutamyl-tRNA(Asn/Gln) amidotransferase subunit C.